A 416-amino-acid chain; its full sequence is Gap junction alpha-3 protein (416 aa).

The stretch at 2–15 (GDWSFLGRLLENAQ) is an intramembrane region. Residues 16–19 (EHST) are Cytoplasmic-facing. Residues 20-40 (VIGKVWLTVLFIFRILVLGAA) form a helical membrane-spanning segment. Over 41–71 (AEEVWGDEQSDFTCNTQQPGCENVCYDRAFP) the chain is Extracellular. 3 cysteine pairs are disulfide-bonded: cysteine 54-cysteine 198, cysteine 61-cysteine 192, and cysteine 65-cysteine 187. A helical transmembrane segment spans residues 72–92 (ISHIRFWALQIIFVSTPTLIY). At 93–158 (LGHVLHIVRM…GALLRTYVFN (66 aa)) the chain is on the cytoplasmic side. The segment covering 110–128 (EEELLRRDNPQHGRGREPM) has biased composition (basic and acidic residues). The disordered stretch occupies residues 110–141 (EEELLRRDNPQHGRGREPMRTGSPRDPPLRDD). A helical transmembrane segment spans residues 159–179 (IIFKTLFEVGFIAGQYFLYGF). Residues 180–207 (QLQPLYRCDRWPCPNTVDCFISRPTEKT) lie on the Extracellular side of the membrane. The helical transmembrane segment at 208 to 228 (IFVIFMLAVACASLVLNMLEI) threads the bilayer. Topologically, residues 229–416 (YHLGWKKLKQ…GRARPGDLAI (188 aa)) are cytoplasmic. Residues 336 to 416 (GAEPQTPASK…GRARPGDLAI (81 aa)) are disordered. Positions 342–353 (PASKPSSAASSP) are enriched in low complexity.

Belongs to the connexin family. Alpha-type (group II) subfamily. As to quaternary structure, a hemichannel or connexon is composed of a hexamer of connexins. A functional gap junction is formed by the apposition of two hemichannels. Forms heteromeric channels with GJA8. As to expression, detected in eye lens (at protein level). Most abundant in lens, but also present in heart and kidney.

The protein resides in the cell membrane. The protein localises to the cell junction. Its subcellular location is the gap junction. Its function is as follows. Structural component of lens fiber gap junctions. Gap junctions are dodecameric channels that connect the cytoplasm of adjoining cells. They are formed by the docking of two hexameric hemichannels, one from each cell membrane. Small molecules and ions diffuse from one cell to a neighboring cell via the central pore. The protein is Gap junction alpha-3 protein (Gja3) of Rattus norvegicus (Rat).